Here is a 122-residue protein sequence, read N- to C-terminus: Large ribosomal subunit protein uL14 (122 aa).

Belongs to the universal ribosomal protein uL14 family. Part of the 50S ribosomal subunit. Forms a cluster with proteins L3 and L19. In the 70S ribosome, L14 and L19 interact and together make contacts with the 16S rRNA in bridges B5 and B8.

Its function is as follows. Binds to 23S rRNA. Forms part of two intersubunit bridges in the 70S ribosome. In Alkalilimnicola ehrlichii (strain ATCC BAA-1101 / DSM 17681 / MLHE-1), this protein is Large ribosomal subunit protein uL14.